We begin with the raw amino-acid sequence, 293 residues long: Ribonuclease HII (293 aa).

Residues 81–271 (THIAGVDEAG…VREALGLPTG (191 aa)) enclose the RNase H type-2 domain. Asp-87, Glu-88, and Asp-180 together coordinate a divalent metal cation. A disordered region spans residues 273 to 293 (PPSALQAELFPEAPSRTGVKS).

This sequence belongs to the RNase HII family. Mn(2+) is required as a cofactor. Mg(2+) serves as cofactor.

It is found in the cytoplasm. The catalysed reaction is Endonucleolytic cleavage to 5'-phosphomonoester.. Endonuclease that specifically degrades the RNA of RNA-DNA hybrids. In Myxococcus xanthus (strain DK1622), this protein is Ribonuclease HII.